The primary structure comprises 612 residues: DITFAGVQRALPNAPDGYVPTSVSCPASRPTVRSAAKLSTNETSWLEVRRGKTLSALKDFFGHVKVGDYDVGAYLDKHSGNSSSLPNIGIAVSGGGWRALMNGAGAVKAFDSRTDNATATGHLGGLLQSATYISGLSGGSWLLGSIYINNFTTVDKLQTHEAGSVWQFGNSIIEGPDAGGIQLLDSAGYYKDLADAVDGKKKAGFDTTLTDIWGRALSYQMFNASNGGLSYTWSSIADTPEFQDGDYPMPFVVADGRNPGELVIGSNSTVYEFNPWEFGTFDPTIFGFVPLEYLGSKFEGGSLPSNESCIRGFDSAGFVIGTSSSLFNQFLLQINTTSLPSFIKDVFNGILFDLDKSQNDIASYDPNPFYKYNEHSSPYAAQKLLDVVDGGEDGQNVPLHPLIQPERHVDVIFAVDSSADTDYFWPNGTSLVATYERSLNSSGIANGTAFPAVPDQNTFINLGLSTRPSFFGCDSSNQTGPSPLVVYIPNAPYSYHSNISTFQLSTDDAERDNIILNGYEVATMANSTLDDNWTACVACAILSRSFERTGTTLPDICSQCFDRYCWNGTVNSTRPESYDPAFYLADNSMASVSLPTMLSTVVAAGLAMLILV.

The N-terminal stretch at 1–9 is a signal peptide; sequence DITFAGVQR. Positions 24-571 constitute a PLA2c domain; sequence SCPASRPTVR…DRYCWNGTVN (548 aa). N-linked (GlcNAc...) asparagine glycans are attached at residues Asn41, Asn81, Asn116, Asn150, Asn223, Asn267, Asn306, Asn335, Asn427, Asn440, Asn446, Asn477, Asn498, Asn526, Asn532, Asn567, and Asn571.

The protein belongs to the lysophospholipase family. N-glycosylated.

It localises to the secreted. It catalyses the reaction a 1-acyl-sn-glycero-3-phosphocholine + H2O = sn-glycerol 3-phosphocholine + a fatty acid + H(+). Catalyzes the release of fatty acids from lysophospholipids. The polypeptide is Lysophospholipase (Penicillium chrysogenum (Penicillium notatum)).